A 525-amino-acid chain; its full sequence is GMP synthase [glutamine-hydrolyzing] (525 aa).

The Glutamine amidotransferase type-1 domain occupies 9–207; it reads RVLILDFGSQ…VLEIAGCEPL (199 aa). The Nucleophile role is filled by Cys-86. Residues His-181 and Glu-183 contribute to the active site. The GMPS ATP-PPase domain occupies 208-400; sequence WTPANIVEDA…LGLPYDMVYR (193 aa). 235–241 contributes to the ATP binding site; it reads SGGVDSS.

As to quaternary structure, homodimer.

The catalysed reaction is XMP + L-glutamine + ATP + H2O = GMP + L-glutamate + AMP + diphosphate + 2 H(+). It participates in purine metabolism; GMP biosynthesis; GMP from XMP (L-Gln route): step 1/1. Functionally, catalyzes the synthesis of GMP from XMP. The protein is GMP synthase [glutamine-hydrolyzing] of Teredinibacter turnerae (strain ATCC 39867 / T7901).